Reading from the N-terminus, the 471-residue chain is MEKQENVGHIVQIFGPVIDVQFPNEHMPAILSALEVKINDESIIFEVAQHLGEGIVRAIAMSMTYNLSKGLEVYDTGSQISVPVGKQVLSRMFNVLGQPIDGGKPLDSFIKNPIHANAPTYLEQKATSEILVTGIKVIDLLIPFIKGGKIGLFGGAGVGKTVLVQELINNIASKHGGLSVFAGVGERSREGNDLYFEMKKAGVLDKTALVFGQMNEPPGARMRVALSALTMAEYFRDYENQDVLLFIDNIFRFTQAGSEVSTLLGRIPSTVGYQPTLSTEMGQLQERITSTIRGSITSVQAVYVPADDITDPAPATTFSHLDAKTVLDRGIAALGIYPAVDPLASSSRALEPNIVGKKHYLVAKKVVQILQRFKELQDIIAILGVDELSESDKQVVARARRIRNFLSQPFFVAQKFSGIQGQFIKIQDTVNNFDELLSGKYDNIPEEAFLYVGTIDQALEKAKKMGWSEKN.

154–161 (GGAGVGKT) lines the ATP pocket.

Belongs to the ATPase alpha/beta chains family. In terms of assembly, F-type ATPases have 2 components, CF(1) - the catalytic core - and CF(0) - the membrane proton channel. CF(1) has five subunits: alpha(3), beta(3), gamma(1), delta(1), epsilon(1). CF(0) has three main subunits: a(1), b(2) and c(9-12). The alpha and beta chains form an alternating ring which encloses part of the gamma chain. CF(1) is attached to CF(0) by a central stalk formed by the gamma and epsilon chains, while a peripheral stalk is formed by the delta and b chains.

The protein localises to the cell membrane. It carries out the reaction ATP + H2O + 4 H(+)(in) = ADP + phosphate + 5 H(+)(out). Functionally, produces ATP from ADP in the presence of a proton gradient across the membrane. The catalytic sites are hosted primarily by the beta subunits. The polypeptide is ATP synthase subunit beta (Mesomycoplasma hyopneumoniae (strain 232) (Mycoplasma hyopneumoniae)).